A 223-amino-acid polypeptide reads, in one-letter code: Endonuclease NucS (223 aa).

Belongs to the NucS endonuclease family.

It is found in the cytoplasm. Cleaves both 3' and 5' ssDNA extremities of branched DNA structures. In Streptomyces avermitilis (strain ATCC 31267 / DSM 46492 / JCM 5070 / NBRC 14893 / NCIMB 12804 / NRRL 8165 / MA-4680), this protein is Endonuclease NucS.